Reading from the N-terminus, the 503-residue chain is Maturase K (503 aa).

This sequence belongs to the intron maturase 2 family. MatK subfamily.

The protein localises to the plastid. Its subcellular location is the chloroplast. In terms of biological role, usually encoded in the trnK tRNA gene intron. Probably assists in splicing its own and other chloroplast group II introns. This Rosa acicularis (Prickly rose) protein is Maturase K.